A 306-amino-acid polypeptide reads, in one-letter code: Pre-mRNA-splicing factor cwf26 (306 aa).

Residues 130-152 are disordered; sequence KAEERRKREEKSSNLDEEELRKS. Positions 130 to 198 form a coiled coil; that stretch reads KAEERRKREE…KEQQQGVVQV (69 aa).

The protein belongs to the CWC26 family. As to quaternary structure, belongs to the 40S cdc5-associated complex (or cwf complex), a spliceosome sub-complex reminiscent of a late-stage spliceosome composed of the U2, U5 and U6 snRNAs and at least brr2, cdc5, cwf2/prp3, cwf3/syf1, cwf4/syf3, cwf5/ecm2, spp42/cwf6, cwf7/spf27, cwf8, cwf9, cwf10, cwf11, cwf12, prp45/cwf13, cwf14, cwf15, cwf16, cwf17, cwf18, cwf19, cwf20, cwf21, cwf22, cwf23, cwf24, cwf25, cwf26, cyp7/cwf27, cwf28, cwf29/ist3, lea1, msl1, prp5/cwf1, prp10, prp12/sap130, prp17, prp22, sap61, sap62, sap114, sap145, slu7, smb1, smd1, smd3, smf1, smg1 and syf2.

It is found in the cytoplasm. The protein resides in the nucleus. Its function is as follows. Involved in mRNA splicing. This is Pre-mRNA-splicing factor cwf26 (cwf26) from Schizosaccharomyces pombe (strain 972 / ATCC 24843) (Fission yeast).